We begin with the raw amino-acid sequence, 466 residues long: MNYLPIFIDIKQKPCLVVGGGSIAYRKINLLLKAYGQVTCIAKSSCKNVAKLVNNKKIIYIERSFESSDVNGQVLIISATNNATLNKKVSELASQNNIPVNVIDSPDLCTFIMPSIVDRSPILIAISSAGKAPVLARIIRAKLESTLPHAYGKLAELAGNFRDQVKAKFSRIEDKRYFWEEIFSGIIAEKVFSGKIQEAKADLQAQLNNTVEAQVGAVYLVGGGPGDPDLLTFRALRLMQQADVVLYDRLVSDRVMELVRRDAQLIYVGKECDNHAVPQGDINQLLVDLAKEGRRVCRLKGGDPFIFGRGGEEIETLAENGIPFQVVPGITAASGCSTYSGIPLTHRDYSQSCRFVTGHLKDGSMNLPWHELAIEQQTIVFYMALNSVEYLSGQLIIHNMRPDMPVALVEKGTTPEQKVYITTLKELPNLVENETIHAPTLIIIGEVVKLREKLNWFDAKPISSKK.

Residues 1–203 (MNYLPIFIDI…GKIQEAKADL (203 aa)) are precorrin-2 dehydrogenase /sirohydrochlorin ferrochelatase. NAD(+)-binding positions include 22 to 23 (SI) and 43 to 44 (KS). Serine 128 is subject to Phosphoserine. Residues 216–466 (GAVYLVGGGP…FDAKPISSKK (251 aa)) are uroporphyrinogen-III C-methyltransferase. Proline 225 serves as a coordination point for S-adenosyl-L-methionine. Aspartate 248 (proton acceptor) is an active-site residue. Lysine 270 (proton donor) is an active-site residue. S-adenosyl-L-methionine contacts are provided by residues 301–303 (GGD), isoleucine 306, 331–332 (TA), methionine 383, and glycine 412.

In the N-terminal section; belongs to the precorrin-2 dehydrogenase / sirohydrochlorin ferrochelatase family. The protein in the C-terminal section; belongs to the precorrin methyltransferase family.

The enzyme catalyses uroporphyrinogen III + 2 S-adenosyl-L-methionine = precorrin-2 + 2 S-adenosyl-L-homocysteine + H(+). It catalyses the reaction precorrin-2 + NAD(+) = sirohydrochlorin + NADH + 2 H(+). The catalysed reaction is siroheme + 2 H(+) = sirohydrochlorin + Fe(2+). The protein operates within cofactor biosynthesis; adenosylcobalamin biosynthesis; precorrin-2 from uroporphyrinogen III: step 1/1. It functions in the pathway cofactor biosynthesis; adenosylcobalamin biosynthesis; sirohydrochlorin from precorrin-2: step 1/1. Its pathway is porphyrin-containing compound metabolism; siroheme biosynthesis; precorrin-2 from uroporphyrinogen III: step 1/1. It participates in porphyrin-containing compound metabolism; siroheme biosynthesis; siroheme from sirohydrochlorin: step 1/1. The protein operates within porphyrin-containing compound metabolism; siroheme biosynthesis; sirohydrochlorin from precorrin-2: step 1/1. Multifunctional enzyme that catalyzes the SAM-dependent methylations of uroporphyrinogen III at position C-2 and C-7 to form precorrin-2 via precorrin-1. Then it catalyzes the NAD-dependent ring dehydrogenation of precorrin-2 to yield sirohydrochlorin. Finally, it catalyzes the ferrochelation of sirohydrochlorin to yield siroheme. The polypeptide is Siroheme synthase (Vesicomyosocius okutanii subsp. Calyptogena okutanii (strain HA)).